The primary structure comprises 776 residues: Lon protease (776 aa).

A Lon N-terminal domain is found at 12–209; it reads LPIIALRGLW…LVYKFVIKEI (198 aa). 360–367 contacts ATP; sequence GPPGVGKT. The 181-residue stretch at 596-776 folds into the Lon proteolytic domain; that stretch reads EDTVGVVNGL…VKEILDEVLI (181 aa). Catalysis depends on residues Ser-683 and Lys-726.

The protein belongs to the peptidase S16 family. As to quaternary structure, homohexamer. Organized in a ring with a central cavity.

The protein resides in the cytoplasm. It catalyses the reaction Hydrolysis of proteins in presence of ATP.. ATP-dependent serine protease that mediates the selective degradation of mutant and abnormal proteins as well as certain short-lived regulatory proteins. Required for cellular homeostasis and for survival from DNA damage and developmental changes induced by stress. Degrades polypeptides processively to yield small peptide fragments that are 5 to 10 amino acids long. Binds to DNA in a double-stranded, site-specific manner. The polypeptide is Lon protease (Finegoldia magna (strain ATCC 29328 / DSM 20472 / WAL 2508) (Peptostreptococcus magnus)).